The sequence spans 486 residues: Probable FAD-binding monooxygenase ltbD (486 aa).

The segment at 186–243 (PAGDGGTNDQGPSRAQSTASSGGSGRPRSTESPQSGAQASTTPTSPPTTQSTGDDPAA) is disordered. Over residues 194–206 (DQGPSRAQSTASS) the composition is skewed to polar residues. Residues 220 to 241 (SGAQASTTPTSPPTTQSTGDDP) are compositionally biased toward low complexity.

The protein belongs to the FAD-binding monooxygenase family. As to quaternary structure, homodimer. FAD serves as cofactor.

Probable FAD-binding monooxygenase; part of the gene cluster that mediates the biosynthesis of luteodienoside A, a glycosylated polyketide consisting of an unusual 1-O-beta-D-glucopyranosyl-myo-inositol (glucinol) ester of 3-hydroxy-2,2,4-trimethylocta-4,6-dienoic acid. The HR-PKS ltbA produces the trimethylated polyketide chain from acetyl-CoA, malonyl-CoA and S-adenosylmethionine (SAM), and the ltbA cAT domain then uses glucinol produced by the glycosyltransferase ltbB as an offloading substrate to release luteodienoside A. Since ltbA and ltbB are sufficient for the biosynthesis of luteodienoside A, the functions of the methyltransferase ltbC and the FAD-binding monooxygenase ltbD within the pathway remain obscur. The chain is Probable FAD-binding monooxygenase ltbD from Aspergillus luteorubrus.